The following is a 165-amino-acid chain: Protein-export protein SecB (165 aa).

It belongs to the SecB family. In terms of assembly, homotetramer, a dimer of dimers. One homotetramer interacts with 1 SecA dimer.

The protein localises to the cytoplasm. One of the proteins required for the normal export of preproteins out of the cell cytoplasm. It is a molecular chaperone that binds to a subset of precursor proteins, maintaining them in a translocation-competent state. It also specifically binds to its receptor SecA. The sequence is that of Protein-export protein SecB from Marinobacter nauticus (strain ATCC 700491 / DSM 11845 / VT8) (Marinobacter aquaeolei).